The sequence spans 367 residues: Zinc finger CCCH domain-containing protein 56 (367 aa).

The segment at 38-80 (YNSQWNADGGGGGSSRAGSEQPPPGKKSRGGGGGEGGGNTSKS) is disordered. Positions 67–76 (GGGGGEGGGN) are enriched in gly residues. 3 C3H1-type zinc fingers span residues 87–114 (FFKT…HGME), 169–197 (AYKG…HDEQ), and 245–273 (NWKT…HGAA).

The protein is Zinc finger CCCH domain-containing protein 56 of Oryza sativa subsp. japonica (Rice).